A 462-amino-acid chain; its full sequence is Glutamate--tRNA ligase 1 (462 aa).

The 'HIGH' region signature appears at 8-18 (PSPTGYLHIGG). Residues 237-241 (KLSKR) carry the 'KMSKS' region motif. Lysine 240 is an ATP binding site.

It belongs to the class-I aminoacyl-tRNA synthetase family. Glutamate--tRNA ligase type 1 subfamily. Monomer.

It is found in the cytoplasm. It carries out the reaction tRNA(Glu) + L-glutamate + ATP = L-glutamyl-tRNA(Glu) + AMP + diphosphate. Its function is as follows. Catalyzes the attachment of glutamate to tRNA(Glu) in a two-step reaction: glutamate is first activated by ATP to form Glu-AMP and then transferred to the acceptor end of tRNA(Glu). This chain is Glutamate--tRNA ligase 1, found in Sulfurimonas denitrificans (strain ATCC 33889 / DSM 1251) (Thiomicrospira denitrificans (strain ATCC 33889 / DSM 1251)).